A 136-amino-acid polypeptide reads, in one-letter code: Large ribosomal subunit protein bL21 (136 aa).

It belongs to the bacterial ribosomal protein bL21 family. As to quaternary structure, part of the 50S ribosomal subunit. Contacts protein L20.

Functionally, this protein binds to 23S rRNA in the presence of protein L20. This chain is Large ribosomal subunit protein bL21, found in Gloeothece citriformis (strain PCC 7424) (Cyanothece sp. (strain PCC 7424)).